The chain runs to 145 residues: 3-hydroxyacyl-[acyl-carrier-protein] dehydratase FabZ (145 aa).

Residue histidine 51 is part of the active site.

It belongs to the thioester dehydratase family. FabZ subfamily.

It localises to the cytoplasm. It carries out the reaction a (3R)-hydroxyacyl-[ACP] = a (2E)-enoyl-[ACP] + H2O. Its function is as follows. Involved in unsaturated fatty acids biosynthesis. Catalyzes the dehydration of short chain beta-hydroxyacyl-ACPs and long chain saturated and unsaturated beta-hydroxyacyl-ACPs. In Macrococcus caseolyticus (strain JCSC5402) (Macrococcoides caseolyticum), this protein is 3-hydroxyacyl-[acyl-carrier-protein] dehydratase FabZ.